The chain runs to 441 residues: Proline--tRNA ligase (441 aa).

This sequence belongs to the class-II aminoacyl-tRNA synthetase family. ProS type 2 subfamily. As to quaternary structure, homodimer.

The protein resides in the cytoplasm. The enzyme catalyses tRNA(Pro) + L-proline + ATP = L-prolyl-tRNA(Pro) + AMP + diphosphate. Its function is as follows. Catalyzes the attachment of proline to tRNA(Pro) in a two-step reaction: proline is first activated by ATP to form Pro-AMP and then transferred to the acceptor end of tRNA(Pro). This chain is Proline--tRNA ligase, found in Bartonella bacilliformis (strain ATCC 35685 / KC583 / Herrer 020/F12,63).